The chain runs to 432 residues: Putative D-alanyl-D-alanine carboxypeptidase (432 aa).

Residues 7 to 25 traverse the membrane as a helical; Signal-anchor segment; sequence ATVLLTFSLSAFAVEYPVL.

It belongs to the peptidase S12 family. YfeW subfamily.

It is found in the cell inner membrane. It carries out the reaction Preferential cleavage: (Ac)2-L-Lys-D-Ala-|-D-Ala. Also transpeptidation of peptidyl-alanyl moieties that are N-acyl substituents of D-alanine.. In Salmonella paratyphi A (strain ATCC 9150 / SARB42), this protein is Putative D-alanyl-D-alanine carboxypeptidase.